The sequence spans 341 residues: DNA-directed RNA polymerase subunit alpha (341 aa).

The tract at residues 1–226 (MLIAQRPTIT…ELFGLVRELN (226 aa)) is alpha N-terminal domain (alpha-NTD). The segment at 241 to 341 (AALAADLALP…DQRYIETEQL (101 aa)) is alpha C-terminal domain (alpha-CTD).

The protein belongs to the RNA polymerase alpha chain family. In terms of assembly, homodimer. The RNAP catalytic core consists of 2 alpha, 1 beta, 1 beta' and 1 omega subunit. When a sigma factor is associated with the core the holoenzyme is formed, which can initiate transcription.

The catalysed reaction is RNA(n) + a ribonucleoside 5'-triphosphate = RNA(n+1) + diphosphate. Its function is as follows. DNA-dependent RNA polymerase catalyzes the transcription of DNA into RNA using the four ribonucleoside triphosphates as substrates. This Acidothermus cellulolyticus (strain ATCC 43068 / DSM 8971 / 11B) protein is DNA-directed RNA polymerase subunit alpha.